We begin with the raw amino-acid sequence, 436 residues long: Histidinol dehydrogenase (436 aa).

3 residues coordinate NAD(+): tyrosine 135, glutamine 196, and asparagine 219. 3 residues coordinate substrate: serine 242, glutamine 264, and histidine 267. Glutamine 264 and histidine 267 together coordinate Zn(2+). Residues glutamate 332 and histidine 333 each act as proton acceptor in the active site. 4 residues coordinate substrate: histidine 333, aspartate 366, glutamate 420, and histidine 425. Aspartate 366 contacts Zn(2+). Histidine 425 is a Zn(2+) binding site.

This sequence belongs to the histidinol dehydrogenase family. Requires Zn(2+) as cofactor.

It catalyses the reaction L-histidinol + 2 NAD(+) + H2O = L-histidine + 2 NADH + 3 H(+). Its pathway is amino-acid biosynthesis; L-histidine biosynthesis; L-histidine from 5-phospho-alpha-D-ribose 1-diphosphate: step 9/9. Catalyzes the sequential NAD-dependent oxidations of L-histidinol to L-histidinaldehyde and then to L-histidine. This is Histidinol dehydrogenase from Methylococcus capsulatus (strain ATCC 33009 / NCIMB 11132 / Bath).